Here is a 313-residue protein sequence, read N- to C-terminus: Probable cell division protein WhiA (313 aa).

Residues 275–308 (SLRELGELAQPPLSKSCVNHRLRKLEQIAEHILA) constitute a DNA-binding region (H-T-H motif).

It belongs to the WhiA family.

Involved in cell division and chromosome segregation. The chain is Probable cell division protein WhiA from Desulforudis audaxviator (strain MP104C).